Here is a 406-residue protein sequence, read N- to C-terminus: Exodeoxyribonuclease 7 large subunit (406 aa).

It belongs to the XseA family. In terms of assembly, heterooligomer composed of large and small subunits.

It is found in the cytoplasm. It catalyses the reaction Exonucleolytic cleavage in either 5'- to 3'- or 3'- to 5'-direction to yield nucleoside 5'-phosphates.. Bidirectionally degrades single-stranded DNA into large acid-insoluble oligonucleotides, which are then degraded further into small acid-soluble oligonucleotides. The chain is Exodeoxyribonuclease 7 large subunit from Desulforudis audaxviator (strain MP104C).